Reading from the N-terminus, the 351-residue chain is UPF0252 protein MJECL39 (351 aa).

2 consecutive transmembrane segments (helical) span residues F58–W78 and I91–V111.

Belongs to the UPF0252 family.

The protein localises to the cell membrane. This Methanocaldococcus jannaschii (strain ATCC 43067 / DSM 2661 / JAL-1 / JCM 10045 / NBRC 100440) (Methanococcus jannaschii) protein is UPF0252 protein MJECL39.